Consider the following 251-residue polypeptide: Methionine aminopeptidase (251 aa).

Substrate is bound at residue H79. Positions 96, 107, and 170 each coordinate a divalent metal cation. H177 is a binding site for substrate. A divalent metal cation-binding residues include E204 and E235.

Belongs to the peptidase M24A family. Methionine aminopeptidase type 1 subfamily. In terms of assembly, monomer. Co(2+) is required as a cofactor. It depends on Zn(2+) as a cofactor. Mn(2+) serves as cofactor. The cofactor is Fe(2+).

It carries out the reaction Release of N-terminal amino acids, preferentially methionine, from peptides and arylamides.. Removes the N-terminal methionine from nascent proteins. The N-terminal methionine is often cleaved when the second residue in the primary sequence is small and uncharged (Met-Ala-, Cys, Gly, Pro, Ser, Thr, or Val). Requires deformylation of the N(alpha)-formylated initiator methionine before it can be hydrolyzed. This chain is Methionine aminopeptidase, found in Borreliella burgdorferi (strain ATCC 35210 / DSM 4680 / CIP 102532 / B31) (Borrelia burgdorferi).